Here is a 177-residue protein sequence, read N- to C-terminus: UPF0114 protein jhp_0175 (177 aa).

3 consecutive transmembrane segments (helical) span residues 15–35 (WLLAPLCIAMSLVLVVLGYVF), 54–74 (LVLSALGLVDLLFMAGLVLMV), and 145–165 (PIFWQVVIHLVFVCSALLTAV).

This sequence belongs to the UPF0114 family.

The protein resides in the cell membrane. This Helicobacter pylori (strain J99 / ATCC 700824) (Campylobacter pylori J99) protein is UPF0114 protein jhp_0175.